The following is a 160-amino-acid chain: 2-C-methyl-D-erythritol 2,4-cyclodiphosphate synthase (160 aa).

A divalent metal cation-binding residues include aspartate 8 and histidine 10. 4-CDP-2-C-methyl-D-erythritol 2-phosphate is bound by residues 8 to 10 and 34 to 35; these read DVH and HS. Residue histidine 42 coordinates a divalent metal cation. Residues 56-58, 61-65, 100-106, 132-135, phenylalanine 139, and arginine 142 contribute to the 4-CDP-2-C-methyl-D-erythritol 2-phosphate site; these read DIG, FPDTD, AQAPKML, and TTTE.

This sequence belongs to the IspF family. Homotrimer. The cofactor is a divalent metal cation.

It carries out the reaction 4-CDP-2-C-methyl-D-erythritol 2-phosphate = 2-C-methyl-D-erythritol 2,4-cyclic diphosphate + CMP. Its pathway is isoprenoid biosynthesis; isopentenyl diphosphate biosynthesis via DXP pathway; isopentenyl diphosphate from 1-deoxy-D-xylulose 5-phosphate: step 4/6. Its function is as follows. Involved in the biosynthesis of isopentenyl diphosphate (IPP) and dimethylallyl diphosphate (DMAPP), two major building blocks of isoprenoid compounds. Catalyzes the conversion of 4-diphosphocytidyl-2-C-methyl-D-erythritol 2-phosphate (CDP-ME2P) to 2-C-methyl-D-erythritol 2,4-cyclodiphosphate (ME-CPP) with a corresponding release of cytidine 5-monophosphate (CMP). This is 2-C-methyl-D-erythritol 2,4-cyclodiphosphate synthase from Proteus mirabilis (strain HI4320).